We begin with the raw amino-acid sequence, 155 residues long: Ribosomal RNA large subunit methyltransferase H (155 aa).

S-adenosyl-L-methionine is bound by residues Leu-72, Gly-103, and 122–127; that span reads LGRMVW.

It belongs to the RNA methyltransferase RlmH family. As to quaternary structure, homodimer.

It localises to the cytoplasm. The catalysed reaction is pseudouridine(1915) in 23S rRNA + S-adenosyl-L-methionine = N(3)-methylpseudouridine(1915) in 23S rRNA + S-adenosyl-L-homocysteine + H(+). Its function is as follows. Specifically methylates the pseudouridine at position 1915 (m3Psi1915) in 23S rRNA. The chain is Ribosomal RNA large subunit methyltransferase H from Cereibacter sphaeroides (strain ATCC 17029 / ATH 2.4.9) (Rhodobacter sphaeroides).